The chain runs to 352 residues: Molybdenum import ATP-binding protein ModC (352 aa).

The ABC transporter domain occupies 1–229; it reads MLELNFSQTL…SVMNPWLPKE (229 aa). ATP is bound at residue 31–38; sequence GVSGAGKT. Residues 289–352 form the Mop domain; it reads QTSIRNVLRA…AQIKSVSITA (64 aa).

This sequence belongs to the ABC transporter superfamily. Molybdate importer (TC 3.A.1.8) family. The complex is composed of two ATP-binding proteins (ModC), two transmembrane proteins (ModB) and a solute-binding protein (ModA).

The protein resides in the cell inner membrane. The catalysed reaction is molybdate(out) + ATP + H2O = molybdate(in) + ADP + phosphate + H(+). Functionally, part of the ABC transporter complex ModABC involved in molybdenum import. Responsible for energy coupling to the transport system. The polypeptide is Molybdenum import ATP-binding protein ModC (Escherichia coli O6:K15:H31 (strain 536 / UPEC)).